Consider the following 355-residue polypeptide: Guanine nucleotide-binding protein G(i) subunit alpha (355 aa).

The N-myristoyl glycine moiety is linked to residue Gly2. The S-palmitoyl cysteine moiety is linked to residue Cys3. The region spanning 33-355 (REVKLLLLGA…KNNLKDCGLF (323 aa)) is the G-alpha domain. Residues 36–49 (KLLLLGAGESGKST) are G1 motif. GTP contacts are provided by residues 41–48 (GAGESGKS), 176–182 (LRTRVKT), 201–205 (DVGGQ), 270–273 (NKKD), and Ala327. Mg(2+) contacts are provided by Ser48 and Thr182. The G2 motif stretch occupies residues 174–182 (DVLRTRVKT). Residues 197–206 (FKLFDVGGQR) form a G3 motif region. Residues 266–273 (ILFLNKKD) form a G4 motif region. Residues 325–330 (TCATDT) are G5 motif.

Belongs to the G-alpha family. G(i/o/t/z) subfamily. G proteins are composed of 3 units; alpha, beta and gamma. The alpha chain contains the guanine nucleotide binding site.

In terms of biological role, guanine nucleotide-binding proteins (G proteins) are involved as modulators or transducers in various transmembrane signaling systems. The polypeptide is Guanine nucleotide-binding protein G(i) subunit alpha (Homarus americanus (American lobster)).